The primary structure comprises 120 residues: Large ribosomal subunit protein bL19 (120 aa).

This sequence belongs to the bacterial ribosomal protein bL19 family.

Functionally, this protein is located at the 30S-50S ribosomal subunit interface and may play a role in the structure and function of the aminoacyl-tRNA binding site. In Nostoc sp. (strain PCC 7120 / SAG 25.82 / UTEX 2576), this protein is Large ribosomal subunit protein bL19 (rplS).